A 193-amino-acid chain; its full sequence is Large ribosomal subunit protein eL19A (193 aa).

Residues 156 to 179 (QEQQDARRARAKAARQRRAKAVEE) form a disordered region. Basic residues predominate over residues 164 to 174 (ARAKAARQRRA).

Belongs to the eukaryotic ribosomal protein eL19 family. In terms of assembly, component of the large ribosomal subunit (LSU). Mature yeast ribosomes consist of a small (40S) and a large (60S) subunit. The 40S small subunit contains 1 molecule of ribosomal RNA (18S rRNA) and at least 33 different proteins. The large 60S subunit contains 3 rRNA molecules (25S, 5.8S and 5S rRNA) and at least 46 different proteins. eL19 lies in close proximity to the binding site for eukaryotic initiation factor eIF4G.

The protein resides in the cytoplasm. Its function is as follows. Component of the ribosome, a large ribonucleoprotein complex responsible for the synthesis of proteins in the cell. The small ribosomal subunit (SSU) binds messenger RNAs (mRNAs) and translates the encoded message by selecting cognate aminoacyl-transfer RNA (tRNA) molecules. The large subunit (LSU) contains the ribosomal catalytic site termed the peptidyl transferase center (PTC), which catalyzes the formation of peptide bonds, thereby polymerizing the amino acids delivered by tRNAs into a polypeptide chain. The nascent polypeptides leave the ribosome through a tunnel in the LSU and interact with protein factors that function in enzymatic processing, targeting, and the membrane insertion of nascent chains at the exit of the ribosomal tunnel. eL19 may play a role in the last stages of translation initiation, in particular subunit joining and shedding/releasing factors. The polypeptide is Large ribosomal subunit protein eL19A (rpl1901) (Schizosaccharomyces pombe (strain 972 / ATCC 24843) (Fission yeast)).